The sequence spans 419 residues: Putative nucleobase-ascorbate transporter 9 (419 aa).

Over residues Met-1–Gly-22 the composition is skewed to gly residues. Positions Met-1–Glu-28 are disordered. The next 10 membrane-spanning stretches (helical) occupy residues Leu-64–Gly-84, Val-91–Thr-111, Leu-113–Ser-133, Ile-153–Trp-173, Ser-184–Val-204, Gly-220–Val-240, Ser-273–Ala-293, Arg-313–Ala-333, Phe-334–Val-354, and Phe-370–Phe-390.

This sequence belongs to the nucleobase:cation symporter-2 (NCS2) (TC 2.A.40) family.

It localises to the membrane. This is Putative nucleobase-ascorbate transporter 9 (NAT9) from Arabidopsis thaliana (Mouse-ear cress).